A 208-amino-acid chain; its full sequence is Imidazoleglycerol-phosphate dehydratase (208 aa).

The protein belongs to the imidazoleglycerol-phosphate dehydratase family.

It is found in the cytoplasm. It catalyses the reaction D-erythro-1-(imidazol-4-yl)glycerol 3-phosphate = 3-(imidazol-4-yl)-2-oxopropyl phosphate + H2O. Its pathway is amino-acid biosynthesis; L-histidine biosynthesis; L-histidine from 5-phospho-alpha-D-ribose 1-diphosphate: step 6/9. This chain is Imidazoleglycerol-phosphate dehydratase, found in Paenarthrobacter aurescens (strain TC1).